We begin with the raw amino-acid sequence, 457 residues long: uncharacterized protein (457 aa).

The first 18 residues, Met1–Ser18, serve as a signal peptide directing secretion. At Glu19–Arg173 the chain is on the lumenal side. The helical transmembrane segment at Met174–Phe194 threads the bilayer. At Arg195–Lys207 the chain is on the cytoplasmic side. The chain crosses the membrane as a helical span at residues Ala208–Asp228. Topologically, residues Thr229–Glu243 are lumenal. Residues Thr244 to Leu264 traverse the membrane as a helical segment. At Ser265–Lys284 the chain is on the cytoplasmic side. Residues Ile285 to Gln305 form a helical membrane-spanning segment. Residues Ser306–Cys314 are Lumenal-facing. The chain crosses the membrane as a helical span at residues Phe315–Leu335. The Cytoplasmic segment spans residues Pro336 to Arg358. The chain crosses the membrane as a helical span at residues Ile359–Cys379. Residues Ser380–Lys457 lie on the Lumenal side of the membrane.

Belongs to the LU7TM family.

It is found in the endoplasmic reticulum membrane. This is an uncharacterized protein from Schizosaccharomyces pombe (strain 972 / ATCC 24843) (Fission yeast).